The primary structure comprises 239 residues: Purine nucleoside phosphorylase DeoD-type 1 (239 aa).

An a purine D-ribonucleoside-binding site is contributed by histidine 5. Phosphate contacts are provided by residues glycine 21, arginine 25, arginine 44, and 88–91 (RVGS). Residues 180–182 (EME) and 204–205 (SD) contribute to the a purine D-ribonucleoside site. The active-site Proton donor is aspartate 205.

The protein belongs to the PNP/UDP phosphorylase family. In terms of assembly, homohexamer; trimer of homodimers.

It catalyses the reaction a purine D-ribonucleoside + phosphate = a purine nucleobase + alpha-D-ribose 1-phosphate. It carries out the reaction a purine 2'-deoxy-D-ribonucleoside + phosphate = a purine nucleobase + 2-deoxy-alpha-D-ribose 1-phosphate. In terms of biological role, catalyzes the reversible phosphorolytic breakdown of the N-glycosidic bond in the beta-(deoxy)ribonucleoside molecules, with the formation of the corresponding free purine bases and pentose-1-phosphate. This is Purine nucleoside phosphorylase DeoD-type 1 from Vibrio parahaemolyticus serotype O3:K6 (strain RIMD 2210633).